Reading from the N-terminus, the 232-residue chain is Uracil-DNA glycosylase (232 aa).

Catalysis depends on D66, which acts as the Proton acceptor.

It belongs to the uracil-DNA glycosylase (UDG) superfamily. UNG family.

The protein localises to the cytoplasm. The enzyme catalyses Hydrolyzes single-stranded DNA or mismatched double-stranded DNA and polynucleotides, releasing free uracil.. In terms of biological role, excises uracil residues from the DNA which can arise as a result of misincorporation of dUMP residues by DNA polymerase or due to deamination of cytosine. The sequence is that of Uracil-DNA glycosylase from Lactobacillus acidophilus (strain ATCC 700396 / NCK56 / N2 / NCFM).